The following is an 865-amino-acid chain: Protein translocase subunit SecA (865 aa).

ATP-binding positions include glutamine 93, 111-115 (GEGKT), and aspartate 501. Positions 841, 843, 852, and 853 each coordinate Zn(2+).

It belongs to the SecA family. Monomer and homodimer. Part of the essential Sec protein translocation apparatus which comprises SecA, SecYEG and auxiliary proteins SecDF-YajC and YidC. The cofactor is Zn(2+).

Its subcellular location is the cell inner membrane. The protein localises to the cytoplasm. The catalysed reaction is ATP + H2O + cellular proteinSide 1 = ADP + phosphate + cellular proteinSide 2.. Functionally, part of the Sec protein translocase complex. Interacts with the SecYEG preprotein conducting channel. Has a central role in coupling the hydrolysis of ATP to the transfer of proteins into and across the cell membrane, serving as an ATP-driven molecular motor driving the stepwise translocation of polypeptide chains across the membrane. The chain is Protein translocase subunit SecA from Helicobacter acinonychis (strain Sheeba).